The following is a 224-amino-acid chain: Polyadenylate-binding protein 2 (224 aa).

Residues 1–36 (MADEDITLNEDQLLESLEETNGEQETEIATEVEEEG) show a composition bias toward acidic residues. Residues 1–40 (MADEDITLNEDQLLESLEETNGEQETEIATEVEEEGSMQI) form a disordered region. The stretch at 9–74 (NEDQLLESLE…QSEVDKQMAG (66 aa)) forms a coiled coil. The RRM domain occupies 96-173 (RSVYVGNVDY…RQIKVMSKRT (78 aa)).

In terms of assembly, interacts with ZC3H3. As to expression, expressed ubiquitously in all transcriptionally active cells.

Its subcellular location is the nucleus. It is found in the cytoplasm. In terms of biological role, involved in the 3'-end formation of mRNA precursors (pre-mRNA) by the addition of a poly(A) tail of 200-250 nt to the upstream cleavage product. Stimulates poly(A) polymerase (PAPOLA) conferring processivity on the poly(A) tail elongation reaction and also controls the poly(A) tail length. Increases the affinity of poly(A) polymerase for RNA. Binds to poly(A) and to poly(G) with high affinity. May protect the poly(A) tail from degradation. Plays a role in the positive regulation of alpha-1,3 fucosylation, possibly by cooperating with swm which regulates nuclear export of fucosyltransferase FucTA. Involved in germline stem cell transit amplification, differentiation and mitosis-to-meiosis transition. The polypeptide is Polyadenylate-binding protein 2 (Drosophila melanogaster (Fruit fly)).